The primary structure comprises 61 residues: Metallothionein-1F (61 aa).

Met-1 carries the post-translational modification N-acetylmethionine. The interval 1 to 29 is beta; it reads MDPNCSCAAGVSCTCAGSCKCKECKCTSC. Cys-5, Cys-7, Cys-13, Cys-15, Cys-19, Cys-21, Cys-24, Cys-26, Cys-29, Cys-33, Cys-34, Cys-36, Cys-37, Cys-41, Cys-44, Cys-48, Cys-50, and Cys-57 together coordinate a divalent metal cation. Residues 30–61 are alpha; sequence KKSCCSCCPVGCSKCAQGCVCKGASEKCSCCD. Ser-58 is subject to Phosphoserine. Positions 59 and 60 each coordinate a divalent metal cation.

Belongs to the metallothionein superfamily. Type 1 family. Monomer.

Its function is as follows. Metallothioneins have a high content of cysteine residues that bind various heavy metals; these proteins are transcriptionally regulated by both heavy metals and glucocorticoids. The polypeptide is Metallothionein-1F (MT1F) (Homo sapiens (Human)).